We begin with the raw amino-acid sequence, 115 residues long: T cell receptor beta variable 11-3 (115 aa).

A signal peptide spans 1 to 21 (MGTRLLCWVAFCLLVEELIEA). The Ig-like domain occupies 22–115 (GVVQSPRYKI…SAVYLCASSL (94 aa)). The cysteines at positions 42 and 111 are disulfide-linked.

In terms of assembly, alpha-beta TR is a heterodimer composed of an alpha and beta chain; disulfide-linked. The alpha-beta TR is associated with the transmembrane signaling CD3 coreceptor proteins to form the TR-CD3 (TcR or TCR). The assembly of alpha-beta TR heterodimers with CD3 occurs in the endoplasmic reticulum where a single alpha-beta TR heterodimer associates with one CD3D-CD3E heterodimer, one CD3G-CD3E heterodimer and one CD247 homodimer forming a stable octameric structure. CD3D-CD3E and CD3G-CD3E heterodimers preferentially associate with TR alpha and TR beta chains, respectively. The association of the CD247 homodimer is the last step of TcR assembly in the endoplasmic reticulum and is required for transport to the cell surface.

The protein localises to the cell membrane. Functionally, v region of the variable domain of T cell receptor (TR) beta chain that participates in the antigen recognition. Alpha-beta T cell receptors are antigen specific receptors which are essential to the immune response and are present on the cell surface of T lymphocytes. Recognize peptide-major histocompatibility (MH) (pMH) complexes that are displayed by antigen presenting cells (APC), a prerequisite for efficient T cell adaptive immunity against pathogens. Binding of alpha-beta TR to pMH complex initiates TR-CD3 clustering on the cell surface and intracellular activation of LCK that phosphorylates the ITAM motifs of CD3G, CD3D, CD3E and CD247 enabling the recruitment of ZAP70. In turn ZAP70 phosphorylates LAT, which recruits numerous signaling molecules to form the LAT signalosome. The LAT signalosome propagates signal branching to three major signaling pathways, the calcium, the mitogen-activated protein kinase (MAPK) kinase and the nuclear factor NF-kappa-B (NF-kB) pathways, leading to the mobilization of transcription factors that are critical for gene expression and essential for T cell growth and differentiation. The T cell repertoire is generated in the thymus, by V-(D)-J rearrangement. This repertoire is then shaped by intrathymic selection events to generate a peripheral T cell pool of self-MH restricted, non-autoaggressive T cells. Post-thymic interaction of alpha-beta TR with the pMH complexes shapes TR structural and functional avidity. The chain is T cell receptor beta variable 11-3 from Homo sapiens (Human).